Here is a 554-residue protein sequence, read N- to C-terminus: Glucose-6-phosphate isomerase (554 aa).

Residue Glu-359 is the Proton donor of the active site. Residues His-390 and Lys-518 contribute to the active site.

This sequence belongs to the GPI family.

The protein localises to the cytoplasm. It catalyses the reaction alpha-D-glucose 6-phosphate = beta-D-fructose 6-phosphate. The protein operates within carbohydrate biosynthesis; gluconeogenesis. It participates in carbohydrate degradation; glycolysis; D-glyceraldehyde 3-phosphate and glycerone phosphate from D-glucose: step 2/4. Its function is as follows. Catalyzes the reversible isomerization of glucose-6-phosphate to fructose-6-phosphate. This is Glucose-6-phosphate isomerase from Pseudomonas fluorescens.